A 629-amino-acid polypeptide reads, in one-letter code: tRNA uridine 5-carboxymethylaminomethyl modification enzyme MnmG (629 aa).

13–18 (GGGHAG) is a binding site for FAD. 273–287 (GPRYCPSIEDKIVRF) provides a ligand contact to NAD(+).

It belongs to the MnmG family. Homodimer. Heterotetramer of two MnmE and two MnmG subunits. Requires FAD as cofactor.

It localises to the cytoplasm. Functionally, NAD-binding protein involved in the addition of a carboxymethylaminomethyl (cmnm) group at the wobble position (U34) of certain tRNAs, forming tRNA-cmnm(5)s(2)U34. The polypeptide is tRNA uridine 5-carboxymethylaminomethyl modification enzyme MnmG (Pseudoalteromonas translucida (strain TAC 125)).